The primary structure comprises 523 residues: Succinate-semialdehyde dehydrogenase, mitochondrial (523 aa).

The N-terminal 35 residues, 1–35 (MATCFLLRSFWAARPALPPPGRFRPEPAGTPRRSY), are a transit peptide targeting the mitochondrion. Lys74 is subject to N6-acetyllysine. The residue at position 114 (Lys114) is an N6-acetyllysine; alternate. Lys114 is modified (N6-succinyllysine; alternate). Lys123 is modified (N6-succinyllysine). Lys128 is subject to N6-acetyllysine. At Lys172 the chain carries N6-succinyllysine. Residues Arg201 and 216–219 (KPAE) contribute to the NAD(+) site. Arg201 lines the substrate pocket. Lys253 carries the post-translational modification N6-acetyllysine; alternate. Lys253 is modified (N6-succinyllysine; alternate). 272 to 277 (GSTATG) is a binding site for NAD(+). The Proton acceptor role is filled by Glu294. Arg322 contributes to the substrate binding site. Cys328 functions as the Nucleophile in the catalytic mechanism. A disulfide bond links Cys328 and Cys330. Residue Lys347 is modified to N6-acetyllysine; alternate. Lys347 carries the N6-succinyllysine; alternate modification. Lys353 carries the post-translational modification N6-acetyllysine. An N6-succinyllysine modification is found at Lys390. Lys399 is modified (N6-acetyllysine). A Phosphoserine modification is found at Ser403. Ser486 serves as a coordination point for substrate. A Phosphoserine modification is found at Ser487.

It belongs to the aldehyde dehydrogenase family. As to quaternary structure, homotetramer.

Its subcellular location is the mitochondrion. The enzyme catalyses succinate semialdehyde + NAD(+) + H2O = succinate + NADH + 2 H(+). It functions in the pathway amino-acid degradation; 4-aminobutanoate degradation. Its activity is regulated as follows. Redox-regulated. Inhibited under oxydizing conditions. Catalyzes one step in the degradation of the inhibitory neurotransmitter gamma-aminobutyric acid (GABA). The sequence is that of Succinate-semialdehyde dehydrogenase, mitochondrial (Aldh5a1) from Mus musculus (Mouse).